The sequence spans 178 residues: Platelet inhibitor triplatin-2 (178 aa).

Residues Met-1–Ala-18 form the signal peptide. Intrachain disulfides connect Cys-25-Cys-134, Cys-60-Cys-178, and Cys-90-Cys-106.

This sequence belongs to the calycin superfamily. Triabin family. As to expression, expressed in salivary glands.

It localises to the secreted. Inhibits platelet aggregation and vasoconstriction through binding to distinct eicosanoids involved in inflammation (acts as a scavenger), and has a role in inhibiting host innate immunity by impairing platelet-assisted formation of neutrophil extracellular traps (NETs). Inhibits platelet aggregation by collagen, and low doses of thromboxane A2 mimetic (TXA2 mimetic), and arachidonic acid (AA) without affecting aggregation induced by ADP, convulxin (GP6 agonist), and PMA. Binds to TXA2, TXB2, prostaglandine H2 mimetic (PGH2 mimetic), PGJ2, and PGF2alpha. Binding is not observed to leukotrienes, AA, and biogenic amines (PGE1, 5(S)-HETE, 12(S)-HETE, 20-HETE, norepinephrine, epinephrine, serotonin, LTC4 and ADP). Induces relaxation of aorta rat previously contracted with TXA2 mimetic. Moreover, it also impairs platelet-assisted formation of neutrophil extracellular traps (NETs). NETs are web-like structures of DNA and proteins that play an important role in killing of pathogens. In addition, NETs are implicated in thrombus formation. In vivo, this protein exhibits antithrombotic activity in two distinct mice models that are highly dependent on platelets. It is noteworthy that it inhibits thrombosis without promoting excessive bleeding. The polypeptide is Platelet inhibitor triplatin-2 (Triatoma infestans (Assassin bug)).